Consider the following 434-residue polypeptide: Glucose-1-phosphate adenylyltransferase (434 aa).

Alpha-D-glucose 1-phosphate contacts are provided by residues Y112, G178, 193 to 194 (EK), and S211.

It belongs to the bacterial/plant glucose-1-phosphate adenylyltransferase family. In terms of assembly, homotetramer.

The enzyme catalyses alpha-D-glucose 1-phosphate + ATP + H(+) = ADP-alpha-D-glucose + diphosphate. Its pathway is glycan biosynthesis; glycogen biosynthesis. Functionally, involved in the biosynthesis of ADP-glucose, a building block required for the elongation reactions to produce glycogen. Catalyzes the reaction between ATP and alpha-D-glucose 1-phosphate (G1P) to produce pyrophosphate and ADP-Glc. The chain is Glucose-1-phosphate adenylyltransferase from Mannheimia succiniciproducens (strain KCTC 0769BP / MBEL55E).